An 82-amino-acid polypeptide reads, in one-letter code: SLEIDELARFAVDEHNKKQNALLEFGKVVNTKEQVVAGKMYYITLEATNGGVKKTYEAKVWVKPWENFKELQEFKPVDAATS.

It belongs to the cystatin family.

In terms of biological role, strong inhibitor of papain and ficin but poor inhibitor of cathepsin H, B and L. The sequence is that of Cysteine proteinase inhibitor A from Helianthus annuus (Common sunflower).